The chain runs to 182 residues: Dual-action ribosomal maturation protein DarP (182 aa).

A disordered region spans residues 1–20 (MNKQPEEWQDPQSLQQQDDE).

This sequence belongs to the DarP family.

It localises to the cytoplasm. Functionally, member of a network of 50S ribosomal subunit biogenesis factors which assembles along the 30S-50S interface, preventing incorrect 23S rRNA structures from forming. Promotes peptidyl transferase center (PTC) maturation. The protein is Dual-action ribosomal maturation protein DarP of Sodalis glossinidius (strain morsitans).